We begin with the raw amino-acid sequence, 226 residues long: 7-cyano-7-deazaguanine synthase (226 aa).

Residue 9–19 coordinates ATP; sequence LSGGLDSATVL. 4 residues coordinate Zn(2+): cysteine 189, cysteine 199, cysteine 202, and cysteine 205.

This sequence belongs to the QueC family. Requires Zn(2+) as cofactor.

The catalysed reaction is 7-carboxy-7-deazaguanine + NH4(+) + ATP = 7-cyano-7-deazaguanine + ADP + phosphate + H2O + H(+). It participates in purine metabolism; 7-cyano-7-deazaguanine biosynthesis. In terms of biological role, catalyzes the ATP-dependent conversion of 7-carboxy-7-deazaguanine (CDG) to 7-cyano-7-deazaguanine (preQ(0)). The protein is 7-cyano-7-deazaguanine synthase of Cupriavidus pinatubonensis (strain JMP 134 / LMG 1197) (Cupriavidus necator (strain JMP 134)).